A 167-amino-acid polypeptide reads, in one-letter code: 16S rRNA aminocarboxypropyltransferase (167 aa).

S-adenosyl-L-methionine contacts are provided by T17, V62, L84, Y99, and S103.

It belongs to the TDD superfamily. TSR3 family.

Its subcellular location is the cytoplasm. The catalysed reaction is an N(1)-methylpseudouridine in rRNA + S-adenosyl-L-methionine = N(1)-methyl-N(3)-[(3S)-3-amino-3-carboxypropyl]pseudouridine in rRNA + S-methyl-5'-thioadenosine + H(+). Its function is as follows. Aminocarboxypropyltransferase that catalyzes the aminocarboxypropyl transfer on pseudouridine corresponding to position 914 in M.jannaschii 16S rRNA. It constitutes the last step in biosynthesis of the hypermodified N1-methyl-N3-(3-amino-3-carboxypropyl) pseudouridine (m1acp3-Psi). In Sulfurisphaera tokodaii (strain DSM 16993 / JCM 10545 / NBRC 100140 / 7) (Sulfolobus tokodaii), this protein is 16S rRNA aminocarboxypropyltransferase.